A 611-amino-acid polypeptide reads, in one-letter code: Aspartate--tRNA(Asp/Asn) ligase (611 aa).

Glutamate 174 provides a ligand contact to L-aspartate. The interval 198–201 (QLFK) is aspartate. L-aspartate is bound at residue arginine 220. Residues 220–222 (RDE) and glutamine 229 contribute to the ATP site. Position 467 (histidine 467) interacts with L-aspartate. An ATP-binding site is contributed by glutamate 501. An L-aspartate-binding site is contributed by arginine 508. 553–556 (GLDR) contributes to the ATP binding site.

The protein belongs to the class-II aminoacyl-tRNA synthetase family. Type 1 subfamily. Homodimer.

It localises to the cytoplasm. It catalyses the reaction tRNA(Asx) + L-aspartate + ATP = L-aspartyl-tRNA(Asx) + AMP + diphosphate. In terms of biological role, aspartyl-tRNA synthetase with relaxed tRNA specificity since it is able to aspartylate not only its cognate tRNA(Asp) but also tRNA(Asn). Reaction proceeds in two steps: L-aspartate is first activated by ATP to form Asp-AMP and then transferred to the acceptor end of tRNA(Asp/Asn). The polypeptide is Aspartate--tRNA(Asp/Asn) ligase (Albidiferax ferrireducens (strain ATCC BAA-621 / DSM 15236 / T118) (Rhodoferax ferrireducens)).